A 306-amino-acid polypeptide reads, in one-letter code: N-acetylmuramic acid 6-phosphate etherase (306 aa).

An SIS domain is found at 59–222 (TAQALGRGGR…STGVMVCLGK (164 aa)). Catalysis depends on Glu87, which acts as the Proton donor. Glu118 is an active-site residue.

It belongs to the GCKR-like family. MurNAc-6-P etherase subfamily. Homodimer.

It carries out the reaction N-acetyl-D-muramate 6-phosphate + H2O = N-acetyl-D-glucosamine 6-phosphate + (R)-lactate. It participates in amino-sugar metabolism; N-acetylmuramate degradation. Specifically catalyzes the cleavage of the D-lactyl ether substituent of MurNAc 6-phosphate, producing GlcNAc 6-phosphate and D-lactate. The polypeptide is N-acetylmuramic acid 6-phosphate etherase (Rippkaea orientalis (strain PCC 8801 / RF-1) (Cyanothece sp. (strain PCC 8801))).